A 914-amino-acid polypeptide reads, in one-letter code: Scaffold attachment factor B1 (914 aa).

Positions 1-24 (MAETLSGLGDSGAAGAAALSSASS) are enriched in low complexity. The disordered stretch occupies residues 1 to 33 (MAETLSGLGDSGAAGAAALSSASSETGTRRLSD). The residue at position 2 (alanine 2) is an N-acetylalanine. Phosphoserine occurs at positions 24 and 55. Residues 31-65 (LSDLRVIDLRAELRKRNVDSSGNKSVLMERLKKAI) form the SAP domain. The disordered stretch occupies residues 64–117 (AIEDEGGNPDEIEITSEGNKKTSKRSSKGRKPEEEGVEDNGLEENSGDGQEDVE). Residues 67-77 (DEGGNPDEIEI) show a composition bias toward acidic residues. Serine 79 bears the Phosphoserine mark. Positions 98–117 (EGVEDNGLEENSGDGQEDVE) are enriched in acidic residues. Glycyl lysine isopeptide (Lys-Gly) (interchain with G-Cter in SUMO2) cross-links involve residues lysine 172 and lysine 186. Phosphothreonine is present on threonine 188. Phosphoserine is present on residues serine 195, serine 197, and serine 209. A disordered region spans residues 221-407 (LGETCKSEPV…EKGRSSCGRN (187 aa)). A compositionally biased stretch (basic and acidic residues) spans 225–234 (CKSEPVKEES). Lysine 231 is covalently cross-linked (Glycyl lysine isopeptide (Lys-Gly) (interchain with G-Cter in SUMO)). The span at 275-286 (SESTAHAQSSKA) shows a compositional bias: polar residues. A compositionally biased stretch (basic and acidic residues) spans 293–309 (VKREPAEQPGDGERTDC). A Glycyl lysine isopeptide (Lys-Gly) (interchain with G-Cter in SUMO) cross-link involves residue lysine 294. Residues 319-330 (EQSSAASELAEA) are compositionally biased toward low complexity. The segment covering 346–359 (EARDSKEDGRKFDF) has biased composition (basic and acidic residues). The span at 371–383 (ESSTSEGADQKMS) shows a compositional bias: polar residues. Residue lysine 381 forms a Glycyl lysine isopeptide (Lys-Gly) (interchain with G-Cter in SUMO2) linkage. 2 positions are modified to phosphoserine: serine 383 and serine 384. The span at 390–401 (DTKRLSKEEKGR) shows a compositional bias: basic and acidic residues. Lysine 392 is covalently cross-linked (Glycyl lysine isopeptide (Lys-Gly) (interchain with G-Cter in SUMO2)). In terms of domain architecture, RRM spans 406-484 (RNFWVSGLSS…KMISVEKAKN (79 aa)). Serine 415 carries the phosphoserine modification. Composition is skewed to basic and acidic residues over residues 477-551 (ISVE…ERSR) and 559-570 (GTERTVVMDKSK). 3 disordered regions span residues 477 to 636 (ISVE…QAQW), 670 to 706 (RERM…QERR), and 748 to 914 (FDHR…TRRY). Glycyl lysine isopeptide (Lys-Gly) (interchain with G-Cter in SUMO2) cross-links involve residues lysine 483, lysine 514, lysine 543, and lysine 570. The segment at 528 to 791 (GDDGSGEKSK…RHGGPERHGR (264 aa)) is interaction with POLR2A; SFRS1; SFRS9 and SFRS10. A Glycyl lysine isopeptide (Lys-Gly) (interchain with G-Cter in SUMO1); alternate cross-link involves residue lysine 578. Residue lysine 578 forms a Glycyl lysine isopeptide (Lys-Gly) (interchain with G-Cter in SUMO2); alternate linkage. Serine 580, serine 582, serine 601, and serine 604 each carry phosphoserine. A compositionally biased stretch (basic and acidic residues) spans 581–636 (GSKERASKSLDRKSASREKRSVVSFDKVKEPRKSRDSESHRVRERSEREQRMQAQW). The Nuclear localization signal signature appears at 599-616 (KRSVVSFDKVKEPRKSRD). Residues 599 to 914 (KRSVVSFDKV…PSDARFTRRY (316 aa)) are interaction with SAFB2. Position 607 is an N6-acetyllysine (lysine 607). Basic and acidic residues predominate over residues 748–795 (FDHRDRGRYPDHSVDRREGSRSMMGEREGQHYPERHGGPERHGRDSRD). Position 810 is an omega-N-methylarginine (arginine 810). Composition is skewed to basic and acidic residues over residues 816 to 831 (PRRD…DDRA) and 840 to 850 (MMDRDHKRWQG). A Glycyl lysine isopeptide (Lys-Gly) (interchain with G-Cter in SUMO2) cross-link involves residue lysine 846. An asymmetric dimethylarginine mark is found at arginine 867, arginine 873, and arginine 883. Positions 891-900 (GMQGGFGGQS) are enriched in gly residues. Basic and acidic residues predominate over residues 904-914 (RPSDARFTRRY).

In terms of assembly, monomer and homodimer. Interacts with KHDRBS3. Interacts with CLK2. Interacts with POLR2A, ASF/SRSF1, SRp30c/SRFS9 and TRA2B/SFRS10. Interacts with SRPK1 and inhibits its activity. Interacts with RBMX. Interacts with FUS. Interacts with ZBED4. Post-translationally, sumoylated by PIAS1 with SUMO1 and SUMO2/3, desumoylated by SENP1. Sumoylation is required for transcriptional repressor activity.

Its subcellular location is the nucleus. Binds to scaffold/matrix attachment region (S/MAR) DNA and forms a molecular assembly point to allow the formation of a 'transcriptosomal' complex (consisting of SR proteins and RNA polymerase II) coupling transcription and RNA processing. Functions as an estrogen receptor corepressor and can also bind to the HSP27 promoter and decrease its transcription. Thereby acts as a negative regulator of cell proliferation. When associated with RBMX, binds to and stimulates transcription from the SREBF1 promoter. The polypeptide is Scaffold attachment factor B1 (SAFB) (Pongo abelii (Sumatran orangutan)).